Reading from the N-terminus, the 160-residue chain is Nucleotide-binding protein Tola_0795 (160 aa).

Belongs to the YajQ family.

Its function is as follows. Nucleotide-binding protein. This chain is Nucleotide-binding protein Tola_0795, found in Tolumonas auensis (strain DSM 9187 / NBRC 110442 / TA 4).